The chain runs to 1413 residues: GTPase-activating protein and VPS9 domain-containing protein 1 (1413 aa).

Residues 147–385 (SYLLQVLRYL…AAFLDVVIGG (239 aa)) enclose the Ras-GAP domain. Phosphoserine is present on serine 227. Phosphothreonine occurs at positions 390 and 458. Disordered regions lie at residues 448–474 (KPGK…PANK), 540–587 (LSDG…GSNG), 718–799 (ESCS…PPSQ), and 826–852 (HYAR…ARLP). The segment covering 451–467 (KSSSLEMTPYSTPQLSP) has biased composition (polar residues). Position 460 is a phosphotyrosine (tyrosine 460). At serine 466 the chain carries Phosphoserine. Residue threonine 470 is modified to Phosphothreonine. Residues serine 721, serine 725, and serine 736 each carry the phosphoserine modification. Over residues 737-756 (SRPSTPGLSVVSGISATSED) the composition is skewed to polar residues. Threonine 741 carries the post-translational modification Phosphothreonine. The residue at position 745 (serine 745) is a Phosphoserine. Over residues 757–768 (IPNKIEDLRSEC) the composition is skewed to basic and acidic residues. A phosphoserine mark is found at serine 856, serine 882, serine 883, serine 888, serine 894, serine 946, serine 972, and serine 999. Basic and acidic residues predominate over residues 871-882 (HSYPERLVRSRS). The interval 871–957 (HSYPERLVRS…DEKSDRNRPW (87 aa)) is disordered. A compositionally biased stretch (low complexity) spans 883–897 (SDVVSSVRRPMSDPS). The segment covering 934-955 (DSSRGETEERKDSDDEKSDRNR) has biased composition (basic and acidic residues). The disordered stretch occupies residues 1011 to 1049 (VMGDGESAHDSPRDETLQNISADDLPDSASQAAHPQDSA). A compositionally biased stretch (basic and acidic residues) spans 1016–1026 (ESAHDSPRDET). Phosphoserine occurs at positions 1031 and 1038. The 141-residue stretch at 1273–1413 (ILRDQVLHEH…EFIKTIDDRK (141 aa)) folds into the VPS9 domain.

It belongs to the GAPVD1 family. As to quaternary structure, interacts with TRIP10/CIP4. Interacts with RAB5A.

It localises to the membrane. It is found in the endosome. In terms of biological role, acts both as a GTPase-activating protein (GAP) and a guanine nucleotide exchange factor (GEF), and participates in various processes such as endocytosis, insulin receptor internalization or LC2A4/GLUT4 trafficking. Acts as a GEF for the Ras-related protein RAB31 by exchanging bound GDP for free GTP, leading to regulate LC2A4/GLUT4 trafficking. In the absence of insulin, it maintains RAB31 in an active state and promotes a futile cycle between LC2A4/GLUT4 storage vesicles and early endosomes, retaining LC2A4/GLUT4 inside the cells. Upon insulin stimulation, it is translocated to the plasma membrane, releasing LC2A4/GLUT4 from intracellular storage vesicles. Also involved in EGFR trafficking and degradation, possibly by promoting EGFR ubiquitination and subsequent degradation by the proteasome. Has GEF activity for Rab5 and GAP activity for Ras. This is GTPase-activating protein and VPS9 domain-containing protein 1 (GAPVD1) from Bos taurus (Bovine).